Consider the following 1422-residue polypeptide: MATTIQNNFRIRRNFGKINKIAEIPNLIAIQKFSYDKFLQADVPPEKRDDTGLQGVFKSVFPIKDFNETSSLEFVSYHLEKPKYDVDECHQRGMTYSAPIKVVVRLVVWDKDEETGAQSIRDVKEQEVYFGEIPLMTENGTFIINGTERVVVSQLHRSPGAFFDHDKGKSHSSGKLLYNARIIPYRGSWIDFEFDHKDILYVRIDRRRKLPATVLLRALGATPDTAKKDPVEFHGSAEEILKYYYDTETIRVEGKGKFEKDLVPDLLKGQRATRDIRDPKSSEVIVKKNRKYTESAIKKLVAAKMKSLPVEPEEVYTKISAEDVVDETTGEVLLEVNEEVTEAKVEELRKRNINEFKVLFIDNLNILPALRDTLMQDKISTPEEAIMEIYRRLRPGDPPTPETATNLFVNLFFNAERYDLSKVGRLKLNYKFGIEEPLENTVLTKRDILEVVRFLIDLKNGKPNKDVDDIDHLGNRRVRAVGELLENQYRIGLVRMERAIKERMSLQEIETLMPHDLINAKPVTAVIKEFFGSSQLSQFMDQTNPLSEVTHKRRLSALGPGGLTRERAGFEVRDVHSTHYGRICPIETPEGPNIGLIASLSTYARVNEYGFVETPYRKVEKGRVTDEVTFYSALEEEKHIIAQANAPVDKKGNFTEAKVWCRKEGEYIYVRPDEVDLMDVSPNQLVSVAASLVPFLENDDANRALMGSNMQRQAVPLLRTQAPLVGTGIEAIVARDSGVTTVAKRDGVVQSVDASRIVVKADVPTSATDVANEVDIYNLIKYQRSNQNTCINQKPIVKPGERVRKGDVIADGPATEMGELALGQNVVVAFMPWQGYNFEDSILLSERLIKEDVFTSVHIEEFECVARDTKLGKEEITRDIPNVGEEALKDLDESGIIRIGAEVKPGDILVGKITPKGETQLSPEEKLLRAIFGEKAGDVRDSSLRVPPGVSGTVINAKVFSRKGVEKDERAKAIEEMEEAKLLKDQNDEIRIIQDSAFQKIRRLLLGKEVTARLVDDKGEQLLKKGDVLDDALLDTVPQRYWGEIAVAGDVQDLARKIIDNFEEQKELVKLLFGEKIGRLKKGDELPPGVIKMVKVYVAIKRKLAVGDKMAGRHGNKGVVSRVLPEEDLPYLEDGTPVDIVLNPLGVPSRMNVGQILETHLGWAARNVGLRLQEMIEKEYGPEQLRKKLRAAFAGTEGGPASDRLAALIDDVPEKELPKLAQKLRRGMHVATPVFDGAREDEMKALMEEGSATLQSILFDGRTGEPFDQDVTVGVMYMLKLHHLVDEKIHARSIGPYSLVTQQPLGGKAQFGGQRLGEMEVWAMEAYGAAYSLQEFLTVKSDDVVGRTRMYEAIVKGENTLESGLPESFNVLIKELQSLALDVELLETPEAQAAREAAERDLGGGPLGAPRGAVASGEKSSA.

The disordered stretch occupies residues 1392–1422 (QAAREAAERDLGGGPLGAPRGAVASGEKSSA).

It belongs to the RNA polymerase beta chain family. In terms of assembly, the RNAP catalytic core consists of 2 alpha, 1 beta, 1 beta' and 1 omega subunit. When a sigma factor is associated with the core the holoenzyme is formed, which can initiate transcription.

It carries out the reaction RNA(n) + a ribonucleoside 5'-triphosphate = RNA(n+1) + diphosphate. In terms of biological role, DNA-dependent RNA polymerase catalyzes the transcription of DNA into RNA using the four ribonucleoside triphosphates as substrates. This is DNA-directed RNA polymerase subunit beta from Anaeromyxobacter dehalogenans (strain 2CP-C).